We begin with the raw amino-acid sequence, 865 residues long: Leucine--tRNA ligase (865 aa).

The short motif at 41-51 is the 'HIGH' region element; that stretch reads PYPSGRIHMGH. Residues 614-618 carry the 'KMSKS' region motif; sequence KMSKS. Lys-617 provides a ligand contact to ATP.

Belongs to the class-I aminoacyl-tRNA synthetase family.

It localises to the cytoplasm. It carries out the reaction tRNA(Leu) + L-leucine + ATP = L-leucyl-tRNA(Leu) + AMP + diphosphate. The chain is Leucine--tRNA ligase from Rhodospirillum centenum (strain ATCC 51521 / SW).